Reading from the N-terminus, the 60-residue chain is Transcriptional regulatory protein SenN (60 aa).

The segment at residues 11–31 (RFRKRKTFGNQILPLELLIEK) is a DNA-binding region (H-T-H motif).

To B.subtilis SenS.

In terms of biological role, regulates the expression of extracellular-protein genes of Bacillus natto. In Bacillus subtilis subsp. natto, this protein is Transcriptional regulatory protein SenN (senN).